Consider the following 190-residue polypeptide: Peptidyl-tRNA hydrolase (190 aa).

Tyr18 lines the tRNA pocket. His23 (proton acceptor) is an active-site residue. 3 residues coordinate tRNA: Phe65, Asn67, and Asn113.

Belongs to the PTH family. As to quaternary structure, monomer.

Its subcellular location is the cytoplasm. The enzyme catalyses an N-acyl-L-alpha-aminoacyl-tRNA + H2O = an N-acyl-L-amino acid + a tRNA + H(+). Its function is as follows. Hydrolyzes ribosome-free peptidyl-tRNAs (with 1 or more amino acids incorporated), which drop off the ribosome during protein synthesis, or as a result of ribosome stalling. Catalyzes the release of premature peptidyl moieties from peptidyl-tRNA molecules trapped in stalled 50S ribosomal subunits, and thus maintains levels of free tRNAs and 50S ribosomes. This is Peptidyl-tRNA hydrolase from Akkermansia muciniphila (strain ATCC BAA-835 / DSM 22959 / JCM 33894 / BCRC 81048 / CCUG 64013 / CIP 107961 / Muc).